We begin with the raw amino-acid sequence, 59 residues long: MTQVIVGENEGVESALRRFKREVSKAGIFNDLKRIRHHETPVEKYKRKQRLKNRTKRRR.

A disordered region spans residues 39 to 59 (ETPVEKYKRKQRLKNRTKRRR). A compositionally biased stretch (basic residues) spans 45–59 (YKRKQRLKNRTKRRR).

Belongs to the bacterial ribosomal protein bS21 family.

This is Small ribosomal subunit protein bS21 from Prochlorococcus marinus (strain SARG / CCMP1375 / SS120).